The primary structure comprises 299 residues: Oxygen-dependent coproporphyrinogen-III oxidase (299 aa).

Residue S92 participates in substrate binding. The Mn(2+) site is built by H96 and H106. H106 (proton donor) is an active-site residue. Residue 108 to 110 (NVR) coordinates substrate. H145 and H175 together coordinate Mn(2+). The important for dimerization stretch occupies residues 240 to 275 (YVEFNLVWDRGTLFGLQTGGRTESILMSMPPLVRWE). 258-260 (GGR) provides a ligand contact to substrate.

It belongs to the aerobic coproporphyrinogen-III oxidase family. Homodimer. Requires Mn(2+) as cofactor.

The protein resides in the cytoplasm. The enzyme catalyses coproporphyrinogen III + O2 + 2 H(+) = protoporphyrinogen IX + 2 CO2 + 2 H2O. It participates in porphyrin-containing compound metabolism; protoporphyrin-IX biosynthesis; protoporphyrinogen-IX from coproporphyrinogen-III (O2 route): step 1/1. In terms of biological role, involved in the heme biosynthesis. Catalyzes the aerobic oxidative decarboxylation of propionate groups of rings A and B of coproporphyrinogen-III to yield the vinyl groups in protoporphyrinogen-IX. In Escherichia coli O17:K52:H18 (strain UMN026 / ExPEC), this protein is Oxygen-dependent coproporphyrinogen-III oxidase.